We begin with the raw amino-acid sequence, 117 residues long: Immunoglobulin heavy variable 5-10-1 (117 aa).

Positions 1–19 are cleaved as a signal peptide; that stretch reads MGSTAILALLLAVLQGVCA. The segment at 20-44 is framework-1; that stretch reads EVQLVQSGAEVKKPGESLRISCKGS. Residues 20-117 enclose the Ig-like domain; it reads EVQLVQSGAE…SDTAMYYCAR (98 aa). Cysteines 41 and 115 form a disulfide. The interval 45–52 is complementarity-determining-1; it reads GYSFTSYW. A framework-2 region spans residues 53–69; it reads ISWVRQMPGKGLEWMGR. Positions 70-77 are complementarity-determining-2; that stretch reads IDPSDSYT. The interval 78 to 115 is framework-3; it reads NYSPSFQGHVTISADKSISTAYLQWSSLKASDTAMYYC. Positions 116–117 are complementarity-determining-3; that stretch reads AR.

Immunoglobulins are composed of two identical heavy chains and two identical light chains; disulfide-linked.

Its subcellular location is the secreted. It localises to the cell membrane. Functionally, v region of the variable domain of immunoglobulin heavy chains that participates in the antigen recognition. Immunoglobulins, also known as antibodies, are membrane-bound or secreted glycoproteins produced by B lymphocytes. In the recognition phase of humoral immunity, the membrane-bound immunoglobulins serve as receptors which, upon binding of a specific antigen, trigger the clonal expansion and differentiation of B lymphocytes into immunoglobulins-secreting plasma cells. Secreted immunoglobulins mediate the effector phase of humoral immunity, which results in the elimination of bound antigens. The antigen binding site is formed by the variable domain of one heavy chain, together with that of its associated light chain. Thus, each immunoglobulin has two antigen binding sites with remarkable affinity for a particular antigen. The variable domains are assembled by a process called V-(D)-J rearrangement and can then be subjected to somatic hypermutations which, after exposure to antigen and selection, allow affinity maturation for a particular antigen. The sequence is that of Immunoglobulin heavy variable 5-10-1 from Homo sapiens (Human).